The following is a 290-amino-acid chain: UPF0761 membrane protein YihY (290 aa).

The next 6 helical transmembrane spans lie at 44 to 64 (LLSL…FPMF), 104 to 124 (VGAC…DSAL), 140 to 160 (FAVY…SLAI), 183 to 203 (ILPL…VPTT), 210 to 230 (ALVG…GFAL), and 244 to 264 (VLAV…IVLL).

The protein belongs to the UPF0761 family.

It localises to the cell inner membrane. The protein is UPF0761 membrane protein YihY of Salmonella paratyphi B (strain ATCC BAA-1250 / SPB7).